A 293-amino-acid polypeptide reads, in one-letter code: Nucleotide-binding protein Csac_1160 (293 aa).

Residue 11 to 18 (GMSGAGKS) coordinates ATP. Residue 62 to 65 (DIRG) participates in GTP binding.

The protein belongs to the RapZ-like family.

Displays ATPase and GTPase activities. This chain is Nucleotide-binding protein Csac_1160, found in Caldicellulosiruptor saccharolyticus (strain ATCC 43494 / DSM 8903 / Tp8T 6331).